We begin with the raw amino-acid sequence, 94 residues long: Large ribosomal subunit protein bL27 (94 aa).

The propeptide occupies methionine 1–phenylalanine 9.

The protein belongs to the bacterial ribosomal protein bL27 family. The N-terminus is cleaved by ribosomal processing cysteine protease Prp.

The protein is Large ribosomal subunit protein bL27 of Bacillus velezensis (strain DSM 23117 / BGSC 10A6 / LMG 26770 / FZB42) (Bacillus amyloliquefaciens subsp. plantarum).